The primary structure comprises 857 residues: Cadherin-related family member 1a (857 aa).

An N-terminal signal peptide occupies residues 1–25 (MKNAREIQFSSFLLLAHFCFVGAQS). The Extracellular segment spans residues 26-709 (DYAPYFYDNG…RENPMHFLGL (684 aa)). 6 Cadherin domains span residues 40–139 (NGNM…RPQF), 140–252 (QNMP…PPIF), 253–359 (IGTP…PPTF), 365–478 (PQNV…APKF), 479–582 (TSDF…PPAF), and 574–693 (DLND…GPLT). A helical transmembrane segment spans residues 710-730 (ISGVILILVFVTVIISTVIFV). Over 731-857 (RRNKANRILP…LEQKNMANRY (127 aa)) the chain is Cytoplasmic. Residues 746–765 (RKKRKPQKQDDFQEPFREEQ) form a disordered region. The segment covering 752–765 (QKQDDFQEPFREEQ) has biased composition (basic and acidic residues).

In terms of tissue distribution, expressed in photoreceptor cells of the outer nuclear layer of the retina and in the pinal gland.

Its subcellular location is the membrane. Functionally, potential calcium-dependent cell-adhesion protein. Plays a role in the organization of retinal cell layers and Muller glia morphology. This is Cadherin-related family member 1a from Danio rerio (Zebrafish).